A 143-amino-acid polypeptide reads, in one-letter code: Large ribosomal subunit protein uL11 (143 aa).

This sequence belongs to the universal ribosomal protein uL11 family. As to quaternary structure, part of the ribosomal stalk of the 50S ribosomal subunit. Interacts with L10 and the large rRNA to form the base of the stalk. L10 forms an elongated spine to which L12 dimers bind in a sequential fashion forming a multimeric L10(L12)X complex. One or more lysine residues are methylated.

Functionally, forms part of the ribosomal stalk which helps the ribosome interact with GTP-bound translation factors. The chain is Large ribosomal subunit protein uL11 from Beutenbergia cavernae (strain ATCC BAA-8 / DSM 12333 / CCUG 43141 / JCM 11478 / NBRC 16432 / NCIMB 13614 / HKI 0122).